We begin with the raw amino-acid sequence, 220 residues long: Uracil-DNA glycosylase (220 aa).

The active-site Proton acceptor is D61.

This sequence belongs to the uracil-DNA glycosylase (UDG) superfamily. UNG family.

The protein resides in the cytoplasm. It carries out the reaction Hydrolyzes single-stranded DNA or mismatched double-stranded DNA and polynucleotides, releasing free uracil.. Functionally, excises uracil residues from the DNA which can arise as a result of misincorporation of dUMP residues by DNA polymerase or due to deamination of cytosine. In Pseudoalteromonas translucida (strain TAC 125), this protein is Uracil-DNA glycosylase.